The sequence spans 239 residues: Serine protease SplF (239 aa).

The first 36 residues, 1 to 36 (MNKNIIIKSIGALTILTSITGVGTTMVEGIQQTAKA), serve as a signal peptide directing secretion. Catalysis depends on charge relay system residues His-75, Asp-114, and Ser-192.

The protein belongs to the peptidase S1B family.

Its subcellular location is the secreted. The sequence is that of Serine protease SplF (splF) from Staphylococcus aureus (strain USA300).